A 173-amino-acid chain; its full sequence is RNA pyrophosphohydrolase (173 aa).

In terms of domain architecture, Nudix hydrolase spans 6–149 (GFRANVGIIL…KRSVYRRALQ (144 aa)). The Nudix box motif lies at 38–59 (GGIDRGETPMDAMYRELWEEVG).

The protein belongs to the Nudix hydrolase family. RppH subfamily. A divalent metal cation is required as a cofactor.

Functionally, accelerates the degradation of transcripts by removing pyrophosphate from the 5'-end of triphosphorylated RNA, leading to a more labile monophosphorylated state that can stimulate subsequent ribonuclease cleavage. This chain is RNA pyrophosphohydrolase, found in Psychrobacter cryohalolentis (strain ATCC BAA-1226 / DSM 17306 / VKM B-2378 / K5).